Consider the following 256-residue polypeptide: uncharacterized protein (256 aa).

Transmembrane regions (helical) follow at residues 42-62, 73-93, and 108-128; these read LIAL…IWFF, FFTL…LIFL, and WLFL…WLIV.

The protein resides in the cell membrane. This is an uncharacterized protein from Mycoplasma genitalium (strain ATCC 33530 / DSM 19775 / NCTC 10195 / G37) (Mycoplasmoides genitalium).